The following is a 2677-amino-acid chain: Probable helicase senataxin (2677 aa).

Residue Lys-339 forms a Glycyl lysine isopeptide (Lys-Gly) (interchain with G-Cter in SUMO1) linkage. Phosphoserine occurs at positions 615, 642, and 878. Lys-894 participates in a covalent cross-link: Glycyl lysine isopeptide (Lys-Gly) (interchain with G-Cter in SUMO2). Phosphoserine is present on residues Ser-911, Ser-947, Ser-956, Ser-1017, and Ser-1019. Residues Lys-1056 and Lys-1063 each participate in a glycyl lysine isopeptide (Lys-Gly) (interchain with G-Cter in SUMO2) cross-link. 2 disordered regions span residues 1158 to 1219 (KKPK…TTVS) and 1237 to 1258 (PVSKTPKKTHSDAKKGQNRSSN). The segment covering 1176-1187 (PSSSVRNEGQSD) has biased composition (polar residues). Over residues 1188–1205 (TNKRDLVGNDFKSIDRRT) the composition is skewed to basic and acidic residues. Residues 1206–1219 (STPNSRIQRATTVS) show a composition bias toward polar residues. A Phosphoserine modification is found at Ser-1330. Glycyl lysine isopeptide (Lys-Gly) (interchain with G-Cter in SUMO2) cross-links involve residues Lys-1340 and Lys-1341. The interval 1351–1385 (QRQIRPKSQKNRRRLSDCESTDVKRAGSHTAQNSD) is disordered. Residues 1354 to 1363 (IRPKSQKNRR) show a composition bias toward basic residues. Over residues 1364 to 1375 (RLSDCESTDVKR) the composition is skewed to basic and acidic residues. Ser-1366 is subject to Phosphoserine. Lys-1415 is covalently cross-linked (Glycyl lysine isopeptide (Lys-Gly) (interchain with G-Cter in SUMO2)). Ser-1489 bears the Phosphoserine mark. The tract at residues 1579–1604 (FRKPGLPPPASKPLRPTTKIFSSKST) is disordered. 3 positions are modified to phosphoserine: Ser-1621, Ser-1623, and Ser-1663. 1963 to 1970 (GPPGTGKS) provides a ligand contact to ATP. Positions 2070-2087 (KKELPSHVQAMHKRKEFL) match the Bipartite nuclear localization signal motif. Residues 2105–2136 (REIQRQELDENISKVSKERQELASKIKEVQGR) adopt a coiled-coil conformation. Thr-2474 carries the phosphothreonine modification. Disordered stretches follow at residues 2474–2496 (THPPTIAPEGSRPQGGLPSSKLD), 2556–2577 (WDPQPSSPQHPGATPPTGEPGF), and 2597–2677 (LSSH…RKLL). The span at 2560-2573 (PSSPQHPGATPPTG) shows a compositional bias: pro residues. A compositionally biased stretch (basic and acidic residues) spans 2628-2671 (ELCHRREARAFSEGEQEKCGSETHHTRRNSRWDKRTLEQEDSSS). The interval 2661 to 2677 (KRTLEQEDSSSKKRKLL) is necessary for nuclear localization.

The protein belongs to the DNA2/NAM7 helicase family. As to quaternary structure, homodimer. Interacts with PER2; the interaction inhibits termination of circadian target genes. Interacts with CHD4, POLR2A, PRKDC and TRIM28. Interacts with UBE2I. Interacts (via N-terminus domain) with EXOSC9 (via C-terminus region); the interaction enhances SETX sumoylation. Interacts with NCL (via N-terminus domain). Interacts with PABPN1, PABPC1 and SF3B1. Interacts with SMN1/SMN2 and POLR2A; SMN1/SMN2 recruits SETX to POLR2A. In terms of processing, ubiquitinated. Post-translationally, sumoylated preferentially with SUMO2 or SUMO3. Highly expressed in skeletal muscle. Expressed in heart, fibroblast, placenta and liver. Weakly expressed in brain and lung. Expressed in the cortex of the kidney (highly expressed in tubular epithelial cells but low expression in the glomerulus).

It is found in the nucleus. Its subcellular location is the nucleoplasm. The protein localises to the nucleolus. It localises to the cytoplasm. The protein resides in the chromosome. It is found in the telomere. Its subcellular location is the cell projection. The protein localises to the axon. It localises to the growth cone. Its function is as follows. Probable RNA/DNA helicase involved in diverse aspects of RNA metabolism and genomic integrity. Plays a role in transcription regulation by its ability to modulate RNA Polymerase II (Pol II) binding to chromatin and through its interaction with proteins involved in transcription. Contributes to the mRNA splicing efficiency and splice site selection. Required for the resolution of R-loop RNA-DNA hybrid formation at G-rich pause sites located downstream of the poly(A) site, allowing XRN2 recruitment and XRN2-mediated degradation of the downstream cleaved RNA and hence efficient RNA polymerase II (RNAp II) transcription termination. Required for the 3' transcriptional termination of PER1 and CRY2, thus playing an important role in the circadian rhythm regulation. Involved in DNA double-strand breaks damage response generated by oxidative stress. In association with RRP45, targets the RNA exosome complex to sites of transcription-induced DNA damage. Plays a role in the development and maturation of germ cells: essential for male meiosis, acting at the interface of transcription and meiotic recombination, and in the process of gene silencing during meiotic sex chromosome inactivation (MSCI). May be involved in telomeric stability through the regulation of telomere repeat-containing RNA (TERRA) transcription. Plays a role in neurite outgrowth in hippocampal cells through FGF8-activated signaling pathways. Inhibits retinoic acid-induced apoptosis. The sequence is that of Probable helicase senataxin from Homo sapiens (Human).